Reading from the N-terminus, the 241-residue chain is Small ribosomal subunit protein uS3 (241 aa).

Residues 39–109 (VRNYVNKNLS…PIRINVVEVA (71 aa)) form the KH type-2 domain. The tract at residues 213-241 (ADEQPTNREPQQRRRQQQRRRQQFEDRSE) is disordered.

This sequence belongs to the universal ribosomal protein uS3 family. As to quaternary structure, part of the 30S ribosomal subunit. Forms a tight complex with proteins S10 and S14.

Binds the lower part of the 30S subunit head. Binds mRNA in the 70S ribosome, positioning it for translation. This Acaryochloris marina (strain MBIC 11017) protein is Small ribosomal subunit protein uS3.